The sequence spans 510 residues: Fumarate hydratase, mitochondrial (510 aa).

Residues 1–44 constitute a mitochondrion transit peptide; the sequence is MYRALWLLARSRRLVRPPASALASAPGLSGAAVPSFWPPNAARM. K61, K66, and K80 each carry N6-acetyllysine; alternate. K61, K66, and K80 each carry N6-succinyllysine; alternate. A phosphothreonine mark is found at T85 and T90. N6-acetyllysine is present on K94. N6-acetyllysine; alternate is present on residues K115 and K122. An N6-succinyllysine; alternate mark is found at K115 and K122. Substrate-binding positions include 145 to 147, 176 to 179, and 186 to 188; these read SGT, HPND, and SSN. K213 is modified (N6-acetyllysine). K223 is modified (N6-acetyllysine; alternate). At K223 the chain carries N6-succinyllysine; alternate. Residue T234 coordinates substrate. Residue H235 is the Proton donor/acceptor of the active site. Phosphothreonine is present on T236. Position 256 is an N6-acetyllysine (K256). Position 292 is an N6-acetyllysine; alternate (K292). K292 is subject to N6-succinyllysine; alternate. S365 is an active-site residue. Substrate is bound by residues S366 and 371–373; that span reads KVN. S366 is modified (phosphoserine). An N6-succinyllysine mark is found at K467 and K473. Position 502 is an N6-acetyllysine (K502).

The protein belongs to the class-II fumarase/aspartase family. Fumarase subfamily. In terms of assembly, homotetramer. Interacts with H2AZ1. Phosphorylation at Thr-236 by PRKDC in response to DNA damage promotes translocation to the nucleus and recruitment to DNA double-strand breaks (DSBs).

The protein localises to the mitochondrion. It is found in the cytoplasm. The protein resides in the cytosol. Its subcellular location is the nucleus. It localises to the chromosome. The enzyme catalyses (S)-malate = fumarate + H2O. It functions in the pathway carbohydrate metabolism; tricarboxylic acid cycle; (S)-malate from fumarate: step 1/1. In terms of biological role, catalyzes the reversible stereospecific interconversion of fumarate to L-malate. Experiments in other species have demonstrated that specific isoforms of this protein act in defined pathways and favor one direction over the other. Its function is as follows. Catalyzes the hydration of fumarate to L-malate in the tricarboxylic acid (TCA) cycle to facilitate a transition step in the production of energy in the form of NADH. Functionally, catalyzes the dehydration of L-malate to fumarate. Fumarate metabolism in the cytosol plays a role during urea cycle and arginine metabolism; fumarate being a by-product of the urea cycle and amino-acid catabolism. Also plays a role in DNA repair by promoting non-homologous end-joining (NHEJ). In response to DNA damage and phosphorylation by PRKDC, translocates to the nucleus and accumulates at DNA double-strand breaks (DSBs): acts by catalyzing formation of fumarate, an inhibitor of KDM2B histone demethylase activity, resulting in enhanced dimethylation of histone H3 'Lys-36' (H3K36me2). This chain is Fumarate hydratase, mitochondrial, found in Macaca fascicularis (Crab-eating macaque).